A 37-amino-acid polypeptide reads, in one-letter code: Cytochrome b6-f complex subunit 5 (37 aa).

A helical transmembrane segment spans residues 5–25; that stretch reads LLSGIVLGLIPITLVGLFVTA.

The protein belongs to the PetG family. As to quaternary structure, the 4 large subunits of the cytochrome b6-f complex are cytochrome b6, subunit IV (17 kDa polypeptide, PetD), cytochrome f and the Rieske protein, while the 4 small subunits are PetG, PetL, PetM and PetN. The complex functions as a dimer.

It localises to the plastid. It is found in the chloroplast thylakoid membrane. In terms of biological role, component of the cytochrome b6-f complex, which mediates electron transfer between photosystem II (PSII) and photosystem I (PSI), cyclic electron flow around PSI, and state transitions. PetG is required for either the stability or assembly of the cytochrome b6-f complex. The sequence is that of Cytochrome b6-f complex subunit 5 from Welwitschia mirabilis (Tree tumbo).